The following is a 129-amino-acid chain: Small ribosomal subunit protein uS11 (129 aa).

The protein belongs to the universal ribosomal protein uS11 family. In terms of assembly, part of the 30S ribosomal subunit. Interacts with proteins S7 and S18. Binds to IF-3.

In terms of biological role, located on the platform of the 30S subunit, it bridges several disparate RNA helices of the 16S rRNA. Forms part of the Shine-Dalgarno cleft in the 70S ribosome. This Maricaulis maris (strain MCS10) (Caulobacter maris) protein is Small ribosomal subunit protein uS11.